We begin with the raw amino-acid sequence, 605 residues long: Protein spinster (605 aa).

A disordered region spans residues Met-1–Pro-94. The segment covering Ser-27–Glu-38 has biased composition (low complexity). A compositionally biased stretch (polar residues) spans Thr-55–Thr-67. The segment covering Arg-76–His-85 has biased composition (basic residues). Residues Phe-115–Val-137 traverse the membrane as a helical segment. N-linked (GlcNAc...) asparagine glycosylation is present at Asn-149. Transmembrane regions (helical) follow at residues Gly-153 to Leu-173, Pro-180 to Met-200, Phe-203 to Ile-223, Met-240 to Ser-260, and Trp-271 to Lys-291. N-linked (GlcNAc...) asparagine glycosylation is present at Asn-319. Helical transmembrane passes span Phe-329–Leu-349, Phe-367–Leu-387, Val-401–Val-421, Leu-431–Leu-451, and Phe-465–Ile-485. Asn-519 carries an N-linked (GlcNAc...) asparagine glycan. A helical membrane pass occupies residues Ser-558–Ile-578. Asn-583 carries an N-linked (GlcNAc...) asparagine glycan.

It belongs to the major facilitator superfamily. Spinster (TC 2.A.1.49) family. Enriched in brain (at protein level).

The protein resides in the late endosome membrane. It is found in the lysosome membrane. Functionally, probable sphingolipid transporter that plays a central role in endosomes and/or lysosomes storage. Involved in TGF-beta-mediated synaptic growth regulation both pre- and postsynaptically via its function in endosomal storage regulation. Also required during oogenesis by regulating yolk spheres storage. This Drosophila melanogaster (Fruit fly) protein is Protein spinster (spin).